Consider the following 455-residue polypeptide: Ribulose bisphosphate carboxylase large chain (455 aa).

Position 5 is an N6,N6,N6-trimethyllysine (lysine 5). 2 residues coordinate substrate: asparagine 114 and threonine 164. Residue lysine 166 is the Proton acceptor of the active site. Lysine 168 provides a ligand contact to substrate. Mg(2+) contacts are provided by lysine 192, aspartate 194, and glutamate 195. The residue at position 192 (lysine 192) is an N6-carboxylysine. Histidine 285 (proton acceptor) is an active-site residue. Substrate contacts are provided by arginine 286, histidine 318, and serine 370.

It belongs to the RuBisCO large chain family. Type I subfamily. Heterohexadecamer of 8 large chains and 8 small chains; disulfide-linked. The disulfide link is formed within the large subunit homodimers. Mg(2+) is required as a cofactor. Post-translationally, the disulfide bond which can form in the large chain dimeric partners within the hexadecamer appears to be associated with oxidative stress and protein turnover.

It is found in the plastid. The protein localises to the chloroplast. The enzyme catalyses 2 (2R)-3-phosphoglycerate + 2 H(+) = D-ribulose 1,5-bisphosphate + CO2 + H2O. The catalysed reaction is D-ribulose 1,5-bisphosphate + O2 = 2-phosphoglycolate + (2R)-3-phosphoglycerate + 2 H(+). In terms of biological role, ruBisCO catalyzes two reactions: the carboxylation of D-ribulose 1,5-bisphosphate, the primary event in carbon dioxide fixation, as well as the oxidative fragmentation of the pentose substrate in the photorespiration process. Both reactions occur simultaneously and in competition at the same active site. The chain is Ribulose bisphosphate carboxylase large chain from Lupinus digitatus (Lupine).